Reading from the N-terminus, the 61-residue chain is Protein transport protein Sec61 subunit beta (61 aa).

The Cytoplasmic portion of the chain corresponds to 1–35; that stretch reads MKRPSTQRAPATVNKGGNSMMKFYSEDAIGLKVGP. Residues 36-56 form a helical membrane-spanning segment; it reads TAVLFMSLIFIAFVIILHIMG. Residues 57 to 61 lie on the Extracellular side of the membrane; that stretch reads KYTRS.

The protein belongs to the SEC61-beta family. In terms of assembly, the SEC61 channel-forming translocon complex.

It is found in the endoplasmic reticulum membrane. Component of SEC61 channel-forming translocon complex that mediates transport of signal peptide-containing precursor polypeptides across the endoplasmic reticulum (ER). Forms a ribosome receptor and a gated pore in the ER membrane, both functions required for cotranslational translocation of nascent polypeptides. This is Protein transport protein Sec61 subunit beta (sec61b) from Dictyostelium discoideum (Social amoeba).